Here is a 191-residue protein sequence, read N- to C-terminus: Dirigent protein 3 (191 aa).

The signal sequence occupies residues 1–21 (MSKLILILTAQILLLTATALA). 2 N-linked (GlcNAc...) asparagine glycosylation sites follow: N96 and N131.

This sequence belongs to the plant dirigent protein family. Homodimer.

The protein resides in the secreted. Its subcellular location is the extracellular space. It is found in the apoplast. In terms of biological role, dirigent proteins impart stereoselectivity on the phenoxy radical-coupling reaction, yielding optically active lignans from two molecules of coniferyl alcohol in the biosynthesis of lignans, flavonolignans, and alkaloids and thus plays a central role in plant secondary metabolism. This Arabidopsis thaliana (Mouse-ear cress) protein is Dirigent protein 3 (DIR3).